The sequence spans 131 residues: Peptide methionine sulfoxide reductase MsrB (131 aa).

Residues L8–R130 form the MsrB domain. C47, C50, C96, and C99 together coordinate Zn(2+). C119 functions as the Nucleophile in the catalytic mechanism.

The protein belongs to the MsrB Met sulfoxide reductase family. Zn(2+) is required as a cofactor.

The catalysed reaction is L-methionyl-[protein] + [thioredoxin]-disulfide + H2O = L-methionyl-(R)-S-oxide-[protein] + [thioredoxin]-dithiol. The sequence is that of Peptide methionine sulfoxide reductase MsrB from Pseudomonas syringae pv. syringae (strain B728a).